A 243-amino-acid chain; its full sequence is Probable transcriptional regulatory protein BPP2422 (243 aa).

The disordered stretch occupies residues 1–21; it reads MAGHSKWANIQHRKGRQDAKR.

This sequence belongs to the TACO1 family.

The protein resides in the cytoplasm. In Bordetella parapertussis (strain 12822 / ATCC BAA-587 / NCTC 13253), this protein is Probable transcriptional regulatory protein BPP2422.